The following is a 94-amino-acid chain: Large ribosomal subunit protein bL25 (94 aa).

This sequence belongs to the bacterial ribosomal protein bL25 family. Part of the 50S ribosomal subunit; part of the 5S rRNA/L5/L18/L25 subcomplex. Contacts the 5S rRNA. Binds to the 5S rRNA independently of L5 and L18.

Its function is as follows. This is one of the proteins that binds to the 5S RNA in the ribosome where it forms part of the central protuberance. This chain is Large ribosomal subunit protein bL25, found in Edwardsiella ictaluri (strain 93-146).